A 335-amino-acid polypeptide reads, in one-letter code: GTPase Obg (335 aa).

The 159-residue stretch at 1–159 folds into the Obg domain; the sequence is MKFVDSASIR…REIGLELSIM (159 aa). Residues 160 to 332 enclose the OBG-type G domain; it reads ADIGLLGMPN…LVAGLFKLVK (173 aa). Residues 166–173, 191–195, 212–215, 282–285, and 313–315 each bind GTP; these read GMPNAGKS, FTTLH, DIPG, NKMD, and SAL. 2 residues coordinate Mg(2+): serine 173 and threonine 193.

Belongs to the TRAFAC class OBG-HflX-like GTPase superfamily. OBG GTPase family. As to quaternary structure, monomer. Mg(2+) is required as a cofactor.

It is found in the cytoplasm. Its function is as follows. An essential GTPase which binds GTP, GDP and possibly (p)ppGpp with moderate affinity, with high nucleotide exchange rates and a fairly low GTP hydrolysis rate. Plays a role in control of the cell cycle, stress response, ribosome biogenesis and in those bacteria that undergo differentiation, in morphogenesis control. In Ruthia magnifica subsp. Calyptogena magnifica, this protein is GTPase Obg.